A 604-amino-acid polypeptide reads, in one-letter code: Dopamine receptor 3 (604 aa).

Residues 1 to 23 (MLTGQHHIPGIESPLMVVLWRVA) lie on the Extracellular side of the membrane. A helical membrane pass occupies residues 24 to 44 (AGVFLPLVPTMAVFGNVLVIL). The Cytoplasmic segment spans residues 45–58 (SVYRERNLQTVTNM). A helical transmembrane segment spans residues 59–79 (LIVSLAVSDLFVAIGVMSFGV). The Extracellular portion of the chain corresponds to 80 to 96 (YYEWNGFKWGLGSFFCH). C95 and C170 form a disulfide bridge. A helical membrane pass occupies residues 97 to 117 (VYQALDVACSTASILNLLAIS). Residues 118–141 (LDRYIAIGHPISYAQYGARGGRAM) are Cytoplasmic-facing. The helical transmembrane segment at 142 to 162 (ISITIVWGVSCAVALPLLLGV) threads the bilayer. Residues 163 to 179 (NPMENDQCELANPWFNM) are Extracellular-facing. A helical transmembrane segment spans residues 180 to 200 (ISSIFSFFIPCIAMIILYTII). At 201 to 520 (FRRLRQRERA…TKQMRREHKA (320 aa)) the chain is on the cytoplasmic side. A disordered region spans residues 399–430 (SIQDEKKMNSRPPENPFAHQNGTNKQRLLPNP). The chain crosses the membrane as a helical span at residues 521–541 (TVTLAVVLAVFLFCWLPFFIL). The Extracellular portion of the chain corresponds to 542 to 559 (HLSNSICLVIDSNSDCIG). A helical membrane pass occupies residues 560-580 (FLPLYLATWLGYLNSSLNPLI). Residues 581 to 604 (YTVFDQRFRNAFRNILSCGFFKKR) are Cytoplasmic-facing.

Belongs to the G-protein coupled receptor 1 family.

It is found in the cell membrane. In terms of biological role, receptor for dopamine. The activity of this receptor is mediated by G proteins which activate adenylyl cyclase. In terms of antagonist responses, would be classed with the D2-like dopamine receptor group. Mediates the effect of dopamine on the inhibition of locomotion. Acts as an antagonist of dop-1. This Caenorhabditis briggsae protein is Dopamine receptor 3.